Here is an 843-residue protein sequence, read N- to C-terminus: Taste receptor type 1 member 2 (843 aa).

The N-terminal stretch at 1–19 is a signal peptide; that stretch reads MGPQARTLCLLSLLLHVLP. The Extracellular segment spans residues 20 to 570; the sequence is KPGKLVENSD…TFLEWHEVPT (551 aa). 9 N-linked (GlcNAc...) asparagine glycosylation sites follow: Asn-87, Asn-296, Asn-316, Asn-355, Asn-372, Asn-432, Asn-484, Asn-491, and Asn-531. Residues 571 to 591 form a helical membrane-spanning segment; it reads IVVAILAALGFFSTLAILFIF. Over 592 to 606 the chain is Cytoplasmic; that stretch reads WRHFQTPMVRSAGGP. A helical membrane pass occupies residues 607–627; that stretch reads MCFLMLVPLLLAFGMVPVYVG. The Extracellular portion of the chain corresponds to 628–642; it reads PPTVFSCFCRQAFFT. Residues 643-663 traverse the membrane as a helical segment; that stretch reads VCFSICLSCITVRSFQIVCVF. The Cytoplasmic segment spans residues 664–682; that stretch reads KMARRLPSAYSFWMRYHGP. The helical transmembrane segment at 683–703 threads the bilayer; it reads YVFVAFITAIKVALVVGNMLA. Residues 704–731 lie on the Extracellular side of the membrane; that stretch reads TTINPIGRTDPDDPNIMILSCHPNYRNG. A helical transmembrane segment spans residues 732 to 752; the sequence is LLFNTSMDLLLSVLGFSFAYM. Over 753-764 the chain is Cytoplasmic; it reads GKELPTNYNEAK. Residues 765–785 traverse the membrane as a helical segment; the sequence is FITLSMTFSFTSSISLCTFMS. Residues 786 to 789 are Extracellular-facing; the sequence is VHDG. The chain crosses the membrane as a helical span at residues 790-810; it reads VLVTIMDLLVTVLNFLAIGLG. Topologically, residues 811-843 are cytoplasmic; the sequence is YFGPKCYMILFYPERNTSAYFNSMIQGYTMRKS.

The protein belongs to the G-protein coupled receptor 3 family. TAS1R subfamily. Forms heterodimers with TAS1R3. In terms of tissue distribution, abundantly expressed in circumvallate and foliate papillae.

Its subcellular location is the cell membrane. Functionally, putative taste receptor. TAS1R2/TAS1R3 recognizes diverse natural and synthetic sweeteners. The sequence is that of Taste receptor type 1 member 2 (Tas1r2) from Rattus norvegicus (Rat).